The chain runs to 455 residues: Epoxide hydrolase 1 (455 aa).

The chain crosses the membrane as a helical; Signal-anchor for type III membrane protein span at residues 1–21 (MLLELLLASVLGFVIYWFVSG). Residues 22 to 455 (DKEESLPLED…CKFVGLVERQ (434 aa)) are Cytoplasmic-facing. Catalysis depends on aspartate 226, which acts as the Nucleophile. Dimethylated arginine is present on arginine 295. Tyrosine 374 serves as the catalytic Proton donor. Residue histidine 431 is the Proton acceptor of the active site.

This sequence belongs to the peptidase S33 family.

The protein resides in the microsome membrane. Its subcellular location is the endoplasmic reticulum membrane. The enzyme catalyses cis-stilbene oxide + H2O = (1R,2R)-hydrobenzoin. The catalysed reaction is 1-(4-methoxyphenyl)-N-methyl-N-[(3-methyloxetan-3-yl)methyl]methanamine + H2O = 2-{[(4-methoxybenzyl)(methyl)amino]methyl}-2-methylpropane-1,3-diol. It catalyses the reaction 8,9-epoxy-(5Z,11Z,14Z)-eicosatrienoate + H2O = 8,9-dihydroxy-(5Z,11Z,14Z)-eicosatrienoate. It carries out the reaction 11,12-epoxy-(5Z,8Z,14Z)-eicosatrienoate + H2O = 11,12-dihydroxy-(5Z,8Z,14Z)-eicosatrienoate. The enzyme catalyses 2-(5Z,8Z,11Z,14Z-eicosatetraenoyl)-glycerol + H2O = glycerol + (5Z,8Z,11Z,14Z)-eicosatetraenoate + H(+). With respect to regulation, inhibited by 10-hydroxystearamide and methoxy-arachidonyl fluorophosphate. Functionally, biotransformation enzyme that catalyzes the hydrolysis of arene and aliphatic epoxides to less reactive and more water soluble dihydrodiols by the trans addition of water. May play a role in the metabolism of endogenous lipids such as epoxide-containing fatty acids. Metabolizes the abundant endocannabinoid 2-arachidonoylglycerol (2-AG) to free arachidonic acid (AA) and glycerol. Binds 20(S)-hydroxycholesterol (20(S)-OHC). This Oryctolagus cuniculus (Rabbit) protein is Epoxide hydrolase 1 (EPHX1).